Here is a 564-residue protein sequence, read N- to C-terminus: Arginine--tRNA ligase (564 aa).

The 'HIGH' region signature appears at 122 to 132 (PNIAKPFSIGH).

This sequence belongs to the class-I aminoacyl-tRNA synthetase family. Monomer.

The protein localises to the cytoplasm. It catalyses the reaction tRNA(Arg) + L-arginine + ATP = L-arginyl-tRNA(Arg) + AMP + diphosphate. The polypeptide is Arginine--tRNA ligase (Lactococcus lactis subsp. cremoris (strain SK11)).